The primary structure comprises 274 residues: Transcriptional activator PerA (274 aa).

One can recognise an HTH araC/xylS-type domain in the interval 168–265 (DRVIKVIELD…NTTPKKYNGV (98 aa)). 2 DNA-binding regions (H-T-H motif) span residues 185 to 206 (GDVS…NKEN) and 232 to 255 (IDEI…KEYY).

Could help in the transcriptional activator of eaeA expression in enteropathogenic E.coli. However, it seems that it is PerC which acts as an activator. The protein is Transcriptional activator PerA (perA) of Escherichia coli O127:H6 (strain E2348/69 / EPEC).